The sequence spans 208 residues: Na(+)-translocating NADH-quinone reductase subunit D (208 aa).

5 helical membrane-spanning segments follow: residues 42-62, 70-90, 103-123, 131-151, and 178-198; these read IVMTFAVIFVTAFSNLFISLI, VRIIVQMAIIASLVILVDQIL, VFVGLIITNCIVMGRAEAFAM, FVDGIGNGLGYGAILVSVAFI, and NGLFLLAPSAFFIIGFIIWGI.

It belongs to the NqrDE/RnfAE family. In terms of assembly, composed of six subunits; NqrA, NqrB, NqrC, NqrD, NqrE and NqrF.

It localises to the cell inner membrane. It carries out the reaction a ubiquinone + n Na(+)(in) + NADH + H(+) = a ubiquinol + n Na(+)(out) + NAD(+). In terms of biological role, NQR complex catalyzes the reduction of ubiquinone-1 to ubiquinol by two successive reactions, coupled with the transport of Na(+) ions from the cytoplasm to the periplasm. NqrA to NqrE are probably involved in the second step, the conversion of ubisemiquinone to ubiquinol. The polypeptide is Na(+)-translocating NADH-quinone reductase subunit D (Pasteurella multocida (strain Pm70)).